Consider the following 153-residue polypeptide: Pheromone-binding protein Gp-9 (153 aa).

A signal peptide spans 1–19 (MKTFVLHIFIFAFVAFASA). Intrachain disulfides connect cysteine 37/cysteine 77, cysteine 73/cysteine 129, and cysteine 118/cysteine 138.

Belongs to the PBP/GOBP family. As to quaternary structure, homodimer.

The protein resides in the secreted. Functionally, colony queen number, a major feature of social organization, is associated with worker genotype for Gp-9. Colonies are headed by either a single reproductive queen (monogyne form) or multiple queens (polygyne form). Differences in worker Gp-9 genotypes between social forms may cause differences in workers' abilities to recognize queens and regulate their numbers. The polypeptide is Pheromone-binding protein Gp-9 (Solenopsis geminata (Tropical fire ant)).